The primary structure comprises 188 residues: dCTP deaminase (188 aa).

DCTP contacts are provided by residues 111-116, 135-137, glutamine 156, tyrosine 170, and glutamine 180; these read KSTYAR and TLE. Glutamate 137 serves as the catalytic Proton donor/acceptor.

Belongs to the dCTP deaminase family. In terms of assembly, homotrimer.

The enzyme catalyses dCTP + H2O + H(+) = dUTP + NH4(+). It participates in pyrimidine metabolism; dUMP biosynthesis; dUMP from dCTP (dUTP route): step 1/2. Functionally, catalyzes the deamination of dCTP to dUTP. The chain is dCTP deaminase from Dechloromonas aromatica (strain RCB).